The primary structure comprises 141 residues: Protein GAT3 (141 aa).

A GATA-type zinc finger spans residues 72–98; that stretch reads CPQCAVIKTSPQWREGPDGEVTLCNAC.

This Saccharomyces cerevisiae (strain ATCC 204508 / S288c) (Baker's yeast) protein is Protein GAT3 (GAT3).